Reading from the N-terminus, the 616-residue chain is MKKQFDTEVNDLLYLIIHSLYSHKEIFLRELISNASDAIDKLKFLSLTNEKFKNIALEPKIEISFDDKSILIKDNGIGMDEQDLTNHLGVIAKSGTKEFINNLKQDEKKSASLIGQFGVGFYSAFIVSEKVEVTSKKALESDAYIWSSDGKTGYEIEKAKKEESGTEIKLYLNKEGLEYANKWKIQEIIKKYSNHINYPIYIKYSEPIMKDGKQEGIEEKEEKLNETTALWTKNKSEIKAEEYNEFYKNTTFDYENPLMHIHTKAEGNLEYTNLFYVPSKAPYDLYYPNTKPGVKLFINRIFITDSEGSLLPNYLRFIKGIIDCQDLPLNVSREILQQNKILSKIKSSSVKKILSELEKLSKKNPEKFSEFSKEFGRCIKEGVYSDFENREKLISLIRFKSSSVDGFVSFKEYKERMNESQKSIYYITGGKENILKENPIVAAYKEKGFEILIMDDELDEAILNLIPEYEGLKLKAINKNETSNELKDENFKKIEEEFKDTLTKVKEILKDHIKEVNLSATLIKEPSAIIIDSNDPTYQMQKIMLSMGQEVKEIKPILELNPNNKIVQNLKNLEPEKLEKISILLFEEAMLTSGMPSKNPGKFINIINEFIEKDFL.

The tract at residues 1 to 333 (MKKQFDTEVN…CQDLPLNVSR (333 aa)) is a; substrate-binding. The interval 334–542 (EILQQNKILS…SNDPTYQMQK (209 aa)) is b. The c stretch occupies residues 543 to 616 (IMLSMGQEVK…INEFIEKDFL (74 aa)).

It belongs to the heat shock protein 90 family. Homodimer.

The protein resides in the cytoplasm. Its function is as follows. Molecular chaperone. Has ATPase activity. The polypeptide is Chaperone protein HtpG (Borreliella burgdorferi (strain ATCC 35210 / DSM 4680 / CIP 102532 / B31) (Borrelia burgdorferi)).